The sequence spans 317 residues: ATP synthase gamma chain (317 aa).

This sequence belongs to the ATPase gamma chain family. F-type ATPases have 2 components, CF(1) - the catalytic core - and CF(0) - the membrane proton channel. CF(1) has five subunits: alpha(3), beta(3), gamma(1), delta(1), epsilon(1). CF(0) has three main subunits: a, b and c.

It is found in the cellular thylakoid membrane. In terms of biological role, produces ATP from ADP in the presence of a proton gradient across the membrane. The gamma chain is believed to be important in regulating ATPase activity and the flow of protons through the CF(0) complex. This is ATP synthase gamma chain from Acaryochloris marina (strain MBIC 11017).